An 861-amino-acid polypeptide reads, in one-letter code: DNA mismatch repair protein MutS (861 aa).

614-621 (GPNMGGKS) contributes to the ATP binding site.

Belongs to the DNA mismatch repair MutS family.

Functionally, this protein is involved in the repair of mismatches in DNA. It is possible that it carries out the mismatch recognition step. This protein has a weak ATPase activity. The protein is DNA mismatch repair protein MutS of Mannheimia succiniciproducens (strain KCTC 0769BP / MBEL55E).